Here is an 872-residue protein sequence, read N- to C-terminus: uncharacterized protein (872 aa).

Positions 496-524 (LQQHHQDISAMQQQILEEKNQLRRATIDV) form a coiled coil. Disordered regions lie at residues 595 to 736 (RPAV…SVQQ) and 844 to 872 (TKENISVNPRDASKAPKSRFQRTKPPQAV). Composition is skewed to polar residues over residues 615-659 (QNGN…QTTF) and 670-686 (PYASRATSNGLSPNNVV). Residues 687 to 736 (QQYQSYYDNPSNQQSNQQSNQQSNQQPNQQPNQQPNQQPNQQPNQQSVQQ) show a composition bias toward low complexity.

It is found in the virion. This is an uncharacterized protein from Acanthamoeba polyphaga mimivirus (APMV).